Reading from the N-terminus, the 623-residue chain is MPPPQGDVTALFLGPPGLGKSALIAALCDKDVETLEAPEGRPDSGVPSLRAAGPGLFLGELSCPPAAPGPWAAEANVLVLVLPGPEGNGEPLAPALGEAALAALARGTPLLAVRNLRPGDSQTAAQARDQTAALLNSAGLGAADLFVLPANCGSSDGCEELERLRAALQSQAEALRRLLPPAQDGFEVLGAAELEAVREAFETGGLEAALSWVRSGLERLGSARLDLAVAGKADVGLVVDMLLGLDPGDPGAAPASVPTAPTPFPAPERPNVVLWTVPLGHTGTATTAAAASHPTHYDALILVTPGAPTEKDWAQVQALLLPDAPLVCVRTDGEGEDPECLGEGKMENPKGESLKNAGGGGLENALSKGREKCSAGSQKAGSGEGPGKAGSEGLQQVVGMKKSGGGDSERAAALSPEDETWEVLEEAPPPVFPLRPGGLPGLCEWLRRALPPAQAGALLLALPPASPSAARTKAAALRAGAWRPALLASLAAAAAPLPGLGWACDVALLRGQLAEWRRGLGLEPTALARRERALGLASGELAARAHFPGPVTRAEVEARLGAWAGEGTAGGAALGALSFLWPAGGAAATGGLGYRAAHGVLLQALDEMRADAEAVLAPPEPAQ.

A disulfide bond links C152 and C158. Residues 155–180 are a coiled coil; the sequence is SDGCEELERLRAALQSQAEALRRLLP. Residues 186 to 189 carry the LIR 1 motif; it reads FEVL. Phosphothreonine is present on T203. Residues 223 to 449 form the IRG-type G domain; the sequence is ARLDLAVAGK…PGLCEWLRRA (227 aa). The tract at residues 334-393 is disordered; sequence EGEDPECLGEGKMENPKGESLKNAGGGGLENALSKGREKCSAGSQKAGSGEGPGKAGSEG. The segment covering 342–353 has biased composition (basic and acidic residues); it reads GEGKMENPKGES. The short motif at 421–424 is the LIR 2 element; it reads WEVL.

It belongs to the TRAFAC class dynamin-like GTPase superfamily. IRG family. In terms of assembly, interacts (via LIR motif 1) with GABARAPL2. Interacts (via LIR motif 2) with MAP1LC3B/LC3B.

It is found in the lysosome. The protein resides in the cytoplasmic vesicle. It localises to the autophagosome. Functionally, autophagy receptor that specifically promotes clearance of misfolded MHC class I molecules by targeting them to the lysosome for degradation. Acts as a molecular adapter that specifically recognizes and binds (1) misfolded MHC class I molecules following their ubiquitination, as well as (2) autophagy-related proteins, promoting the recruitment of misfolded MHC class I molecules to autophagy machinery for degradation. Degradation of misfolded MHC class I molecules is essential to prevent accumulation of defective MHC class I complexes at the surface of CD8(+) T-cells and prevent a stronger T-cell-mediated response. In contrast to other members of the family, does not show GTPase activity. The sequence is that of Immunity-related GTPase family Q protein from Homo sapiens (Human).